The chain runs to 266 residues: Orcokinin peptides type B (266 aa).

A signal peptide spans 1–20; it reads MTAQMFTIALLLSLSAIAAA. 3 consecutive propeptides follow at residues 21–46, 240–246, and 264–266; these read GTIK…GAPV, DYDVFPD, and NVE.

It belongs to the orcokinin family.

It is found in the secreted. Its function is as follows. Myotropic peptides that enhance both the frequency and amplitude of spontaneous hindgut contractions. This Procambarus clarkii (Red swamp crayfish) protein is Orcokinin peptides type B.